The chain runs to 455 residues: Differentiation-associated protein 1 (455 aa).

A signal peptide spans 1-21 (MKFKLFLLVFFVFLLPYLSQS). The segment at 349–434 (IGSSSSSSSS…SDDDLGNPSS (86 aa)) is disordered. Low complexity predominate over residues 351–423 (SSSSSSSSSS…KSNHTSSESS (73 aa)). Serine 433 is lipidated: GPI-like-anchor amidated serine. The propeptide at 434-455 (SSSILSVSKLIILLISIILYCF) is removed in mature form.

It localises to the cell membrane. Plays a role in differentiation. The chain is Differentiation-associated protein 1 (dia1) from Dictyostelium discoideum (Social amoeba).